The chain runs to 302 residues: Sulfate adenylyltransferase subunit 2 (302 aa).

Residues 280-302 (RQGRLIDSDQSASMEQKKRQGYF) form a disordered region.

It belongs to the PAPS reductase family. CysD subfamily. In terms of assembly, heterodimer composed of CysD, the smaller subunit, and CysN.

It carries out the reaction sulfate + ATP + H(+) = adenosine 5'-phosphosulfate + diphosphate. Its pathway is sulfur metabolism; hydrogen sulfide biosynthesis; sulfite from sulfate: step 1/3. Its function is as follows. With CysN forms the ATP sulfurylase (ATPS) that catalyzes the adenylation of sulfate producing adenosine 5'-phosphosulfate (APS) and diphosphate, the first enzymatic step in sulfur assimilation pathway. APS synthesis involves the formation of a high-energy phosphoric-sulfuric acid anhydride bond driven by GTP hydrolysis by CysN coupled to ATP hydrolysis by CysD. This is Sulfate adenylyltransferase subunit 2 from Shewanella putrefaciens (strain CN-32 / ATCC BAA-453).